Consider the following 1016-residue polypeptide: C2 domain-containing protein 5 (1016 aa).

In terms of domain architecture, C2 spans 1–109 (MPGKLKVKIV…EAATVISGWF (109 aa)). Aspartate 19, aspartate 26, aspartate 76, aspartate 78, serine 81, and aspartate 84 together coordinate Ca(2+). The residue at position 197 (serine 197) is a Phosphoserine; by PKB/AKT2. Phosphoserine is present on residues serine 200 and serine 260. Residues 265-330 (LKEIPFNEDP…SGSAGKEGGP (66 aa)) form a disordered region. Residues 274-289 (PNPNTHSSGPSTPLKN) are compositionally biased toward polar residues. Residues 290 to 318 (QTYSFSPSKSYSRQSSSSDTDLSLTPKTG) show a composition bias toward low complexity. Serine 293, serine 295, serine 304, serine 305, and serine 306 each carry phosphoserine. The residue at position 317 (threonine 317) is a Phosphothreonine. The span at 319 to 328 (MGSGSAGKEG) shows a compositional bias: gly residues. Residue serine 323 is modified to Phosphoserine. A Phosphothreonine modification is found at threonine 601. Residues 636–668 (VSEEMIGSPIPEPRQRSRLLRSQSESSDEVTEL) form a disordered region. Phosphoserine occurs at positions 643, 657, 659, 661, and 662. Threonine 666 is subject to Phosphothreonine. A phosphoserine mark is found at serine 671, serine 817, and serine 869.

It depends on Ca(2+) as a cofactor. Phosphorylated on Ser-197 by active myristoylated kinase AKT2; insulin-stimulated phosphorylation by AKT2 regulates SLC2A4/GLUT4 translocation into the plasma membrane. As to expression, expressed in liver, muscle and fat.

It is found in the cytoplasmic vesicle membrane. Its subcellular location is the cytoplasm. The protein localises to the cell cortex. It localises to the cell membrane. The protein resides in the cell projection. It is found in the ruffle. Required for insulin-stimulated glucose transport and glucose transporter SLC2A4/GLUT4 translocation from intracellular glucose storage vesicle (GSV) to the plasma membrane (PM) in adipocytes. Binds phospholipid membranes in a calcium-dependent manner and is necessary for the optimal membrane fusion between SLC2A4/GLUT4 GSV and the PM. The chain is C2 domain-containing protein 5 (C2cd5) from Mus musculus (Mouse).